Here is a 193-residue protein sequence, read N- to C-terminus: Acyl carrier protein phosphodiesterase (193 aa).

It belongs to the AcpH family.

The catalysed reaction is holo-[ACP] + H2O = apo-[ACP] + (R)-4'-phosphopantetheine + H(+). In terms of biological role, converts holo-ACP to apo-ACP by hydrolytic cleavage of the phosphopantetheine prosthetic group from ACP. The chain is Acyl carrier protein phosphodiesterase from Enterobacter sp. (strain 638).